We begin with the raw amino-acid sequence, 393 residues long: Bifunctional enzyme IspD/IspF (393 aa).

The tract at residues 1–234 (MTTSQRTAAI…ARLAASLGDI (234 aa)) is 2-C-methyl-D-erythritol 4-phosphate cytidylyltransferase. Residues 235 to 393 (RTGTGYDVHA…SATIRLPWGA (159 aa)) are 2-C-methyl-D-erythritol 2,4-cyclodiphosphate synthase. 2 residues coordinate a divalent metal cation: aspartate 241 and histidine 243. Residues 241–243 (DVH) and 267–268 (HS) each bind 4-CDP-2-C-methyl-D-erythritol 2-phosphate. Histidine 275 is an a divalent metal cation binding site. 4-CDP-2-C-methyl-D-erythritol 2-phosphate-binding positions include 289 to 291 (DIG), 365 to 368 (TTSE), phenylalanine 372, and arginine 375.

This sequence in the N-terminal section; belongs to the IspD/TarI cytidylyltransferase family. IspD subfamily. The protein in the C-terminal section; belongs to the IspF family. The cofactor is a divalent metal cation.

The enzyme catalyses 2-C-methyl-D-erythritol 4-phosphate + CTP + H(+) = 4-CDP-2-C-methyl-D-erythritol + diphosphate. The catalysed reaction is 4-CDP-2-C-methyl-D-erythritol 2-phosphate = 2-C-methyl-D-erythritol 2,4-cyclic diphosphate + CMP. It functions in the pathway isoprenoid biosynthesis; isopentenyl diphosphate biosynthesis via DXP pathway; isopentenyl diphosphate from 1-deoxy-D-xylulose 5-phosphate: step 2/6. It participates in isoprenoid biosynthesis; isopentenyl diphosphate biosynthesis via DXP pathway; isopentenyl diphosphate from 1-deoxy-D-xylulose 5-phosphate: step 4/6. Functionally, bifunctional enzyme that catalyzes the formation of 4-diphosphocytidyl-2-C-methyl-D-erythritol from CTP and 2-C-methyl-D-erythritol 4-phosphate (MEP) (IspD), and catalyzes the conversion of 4-diphosphocytidyl-2-C-methyl-D-erythritol 2-phosphate (CDP-ME2P) to 2-C-methyl-D-erythritol 2,4-cyclodiphosphate (ME-CPP) with a corresponding release of cytidine 5-monophosphate (CMP) (IspF). This chain is Bifunctional enzyme IspD/IspF, found in Bradyrhizobium sp. (strain ORS 278).